Here is a 2055-residue protein sequence, read N- to C-terminus: Multiple PDZ domain protein (2055 aa).

One can recognise an L27 domain in the interval 1 to 63; it reads MLETIDKNRA…SLQQLKDQVN (63 aa). Positions 138-225 constitute a PDZ 1 domain; sequence IFELLKPPCG…TVQLVIARGS (88 aa). Residue serine 231 is modified to Phosphoserine. Residues 258-338 enclose the PDZ 2 domain; that stretch reads TIELVNDGSG…RVKLMIARGA (81 aa). The segment covering 348-360 has biased composition (low complexity); it reads LGITLSSSTSSTS. The interval 348–372 is disordered; the sequence is LGITLSSSTSSTSEMRVDASTQKND. PDZ domains follow at residues 378–464, 546–627, and 693–779; these read DVEL…MRKG, VAHV…CRRT, and SIEL…VAKP. Residues serine 783 and serine 1066 each carry the phosphoserine modification. The PDZ 6 domain maps to 996-1077; the sequence is TVTIAKGSSS…IGPDIKITYV (82 aa). Residues 1111–1130 are disordered; the sequence is PELPEREEGEGEESELQNAA. The PDZ 7 domain maps to 1139–1231; sequence RVELWREPSK…PVVFMVQSII (93 aa). Arginine 1158 bears the Omega-N-methylarginine mark. The span at 1264 to 1274 shows a compositional bias: polar residues; it reads LTTDQAPSQSE. A disordered region spans residues 1264 to 1299; sequence LTTDQAPSQSESETEKPALCNVPPSSPSVFSEMGSD. The PDZ 8 domain occupies 1338–1421; the sequence is VIELEKGQSG…KVKIIFIRNA (84 aa). Residues 1435-1445 show a composition bias toward low complexity; sequence ADSPSSTSDSP. A disordered region spans residues 1435–1459; sequence ADSPSSTSDSPQNKEVEPCSTTSAS. Residues 1471-1552 enclose the PDZ 9 domain; it reads QLELPKDQGG…TVKLTVRAEN (82 aa). Residues 1557–1597 form a disordered region; sequence AVPSSAVTVSGERKDNSQTPAVPAPDLEPIPSTSRSSTPAV. 2 PDZ domains span residues 1614–1697 and 1710–1792; these read TIEI…YRDE and TIEL…GRVK. Residues 1795 to 1834 are disordered; that stretch reads PFHSERRPSQSSQVSESSLSSFTPPLSGINTSESLESNSK. 2 positions are modified to phosphoserine: serine 1803 and serine 1809. The segment covering 1803–1815 has biased composition (low complexity); sequence SQSSQVSESSLSS. Residues 1816–1834 show a composition bias toward polar residues; sequence FTPPLSGINTSESLESNSK. PDZ domains are found at residues 1847 to 1933 and 1972 to 2055; these read TVEI…VAGG and TITL…MVLS.

In terms of assembly, interacts with CLDN5, DLG4, GRIN1, SYNGAP1, CAMK2A and CAMK2B, HTR2A, HTR2B, HTR2C, PLEKHA1/TAPP1 and PLEKHA2/TAPP2. Interacts with F11R/JAM, CLDN1, NG2, CXADR, CRB1, MPP4 and PALS1. Interacts with FAT4 (via cytoplasmic domain). Interacts with DLL1. In the brain, it is strongly expressed in the choroid plexus. Within the hippocampal formation, strongest expression was seen in the soma of CA1-4 pyramidal cells. Expressed in most neocortical regions with the strongest expression in piriform cortex and amygdaloid nuclei but also detected in the subiculum and olfactory bulb. In the cerebellum, the highest level of expression was found in Purkinje cells. Moderately expressed in the granular layer and molecular layer. Expressed in the pontine nuclei, parts of spinal trigeminal nuclei, and the principal sensory trigeminal nuclei of the metencephalon. Expressed in all thalamic and hypothalamic nuclei, and the substantia nigra (at protein level). Ubiquitously expressed.

It is found in the cell membrane. The protein localises to the apical cell membrane. The protein resides in the postsynaptic density. It localises to the cell projection. Its subcellular location is the dendrite. It is found in the cell junction. The protein localises to the tight junction. The protein resides in the synapse. It localises to the synaptosome. Member of the NMDAR signaling complex that may play a role in control of AMPAR potentiation and synaptic plasticity in excitatory synapses. Promotes clustering of HT2RC at the cell surface. The polypeptide is Multiple PDZ domain protein (Mpdz) (Mus musculus (Mouse)).